A 427-amino-acid chain; its full sequence is uncharacterized protein (427 aa).

A coiled-coil region spans residues 135–168 (PILKQKLVSLESKVKKIDKEMEKHNDLLKEIQEN).

This is an uncharacterized protein from Arabidopsis thaliana (Mouse-ear cress).